Here is a 383-residue protein sequence, read N- to C-terminus: Na(+)/H(+) antiporter NhaA (383 aa).

11 helical membrane-spanning segments follow: residues 21-41 (AAGV…NSIW), 56-76 (LTMR…LAGL), 94-114 (LLPG…YVAF), 123-143 (GWAI…ALAG), 152-172 (VFLT…IALF), 175-195 (GTLS…LLML), 202-222 (TLFP…KSGI), 258-278 (FVIL…GVTV), 287-307 (LGVG…AVSI), 326-346 (IGIA…AILA), and 355-375 (QIKL…YILL).

Belongs to the NhaA Na(+)/H(+) (TC 2.A.33) antiporter family.

It localises to the cell inner membrane. The catalysed reaction is Na(+)(in) + 2 H(+)(out) = Na(+)(out) + 2 H(+)(in). Its function is as follows. Na(+)/H(+) antiporter that extrudes sodium in exchange for external protons. The protein is Na(+)/H(+) antiporter NhaA of Granulibacter bethesdensis (strain ATCC BAA-1260 / CGDNIH1).